A 668-amino-acid polypeptide reads, in one-letter code: Kinesin-like protein KIF2B (668 aa).

T125 carries the phosphothreonine; by PLK1 modification. Residues 149–177 (CLREIEKLQKQREKRRRLQLEIRARRALD) are a coiled coil. S204 is modified (phosphoserine; by PLK1). A Kinesin motor domain is found at 213 to 543 (RICVCVRKRP…LRYANRVKEL (331 aa)). 303 to 310 (GQTGSGKT) is an ATP binding site. The span at 585 to 604 (PTVEKEEEKESDELTSKKEP) shows a compositional bias: basic and acidic residues. Positions 585–605 (PTVEKEEEKESDELTSKKEPA) are disordered. The stretch at 646–667 (VLTDIQKKLQSLREDLQKKSQV) forms a coiled coil.

This sequence belongs to the TRAFAC class myosin-kinesin ATPase superfamily. Kinesin family. MCAK/KIF2 subfamily. In terms of processing, phosphorylation at Thr-125 by PLK1 is required for activity in the correction of kinetochore-microtubules attachment errors, while phosphorylation at Ser-204 also by PLK1 is required for the kinetochore localization and activity in prometaphase.

It localises to the cytoplasm. Its subcellular location is the cytoskeleton. The protein localises to the microtubule organizing center. The protein resides in the centrosome. It is found in the spindle. It localises to the chromosome. Its subcellular location is the centromere. The protein localises to the kinetochore. Functionally, plus end-directed microtubule-dependent motor required for spindle assembly and chromosome movement during mitosis. Has microtubule depolymerization activity. Plays a role in chromosome congression. In Mus musculus (Mouse), this protein is Kinesin-like protein KIF2B (Kif2b).